A 519-amino-acid chain; its full sequence is Fatty acid--[acyl-carrier-protein] ligase ScoC (519 aa).

Thr-167 provides a ligand contact to Mg(2+). The ATP site is built by Ile-216 and Thr-312. Residue Glu-313 coordinates Mg(2+). Residues Asp-394 and Lys-411 each contribute to the ATP site.

The protein belongs to the ATP-dependent AMP-binding enzyme family. Requires Mg(2+) as cofactor.

It catalyses the reaction a medium-chain fatty acid + holo-[ACP] + ATP = a medium-chain fatty acyl-[ACP] + AMP + diphosphate. The enzyme catalyses a medium-chain fatty acid + ATP + H(+) = a medium-chain fatty acyl-AMP + diphosphate. It carries out the reaction a medium-chain fatty acyl-AMP + holo-[ACP] = a medium-chain fatty acyl-[ACP] + AMP + H(+). The catalysed reaction is octanoate + holo-[ACP] + ATP = octanoyl-[ACP] + AMP + diphosphate. It catalyses the reaction octanoate + ATP + H(+) = octanoyl-AMP + diphosphate. The enzyme catalyses octanoyl-AMP + holo-[ACP] = octanoyl-[ACP] + AMP + H(+). It carries out the reaction a (2E)-enoyl fatty acid + holo-[ACP] + ATP = a (2E)-enoyl-[ACP] + AMP + diphosphate. The catalysed reaction is a (2E)-enoyl fatty acid + ATP + H(+) = a (2E)-2-fatty-enoyl-AMP + diphosphate. It catalyses the reaction a (2E)-2-fatty-enoyl-AMP + holo-[ACP] = a (2E)-enoyl-[ACP] + AMP + H(+). The enzyme catalyses (2E)-2-butenoate + holo-[ACP] + ATP = (2E)-butenoyl-[ACP] + AMP + diphosphate. It carries out the reaction (2E)-2-butenoate + ATP + H(+) = (2E)-but-2-enoyl-AMP + diphosphate. The catalysed reaction is (2E)-but-2-enoyl-AMP + holo-[ACP] = (2E)-butenoyl-[ACP] + AMP + H(+). It catalyses the reaction a (3R)-3-isocyanyl-fatty acid + holo-[ACP] + ATP = a (3R)-3-isocyanyl-fatty acyl-[ACP] + AMP + diphosphate. The enzyme catalyses a (3R)-3-isocyanyl-fatty acid + ATP + H(+) = a (3R)-3-isocyanyl-fatty acyl-AMP + diphosphate. It carries out the reaction a (3R)-3-isocyanyl-fatty acyl-AMP + holo-[ACP] = a (3R)-3-isocyanyl-fatty acyl-[ACP] + AMP + H(+). The catalysed reaction is (3R)-3-isocyanylbutanoate + holo-[ACP] + ATP = (3R)-3-isocyanylbutanoyl-[ACP] + AMP + diphosphate. It catalyses the reaction (3R)-3-isocyanylbutanoate + ATP + H(+) = (3R)-3-isocyanylbutanoyl-AMP + diphosphate. The enzyme catalyses (3R)-3-isocyanylbutanoyl-AMP + holo-[ACP] = (3R)-3-isocyanylbutanoyl-[ACP] + AMP + H(+). Acyl:acyl-carrier protein ligase involved in the biosynthesis of a unique class of isonitrile lipopeptides (INLPs). Shows a strong preference for fatty acids with a short/medium-chain length (C4-C8) in vitro, and accepts alpha,beta-unsaturated fatty acids such as crotonate, which seems to be a physiological substrate. Acts twice during the INLP pathway, catalyzing the activation of crotonate ((2E)-2-butenoate) as well as (3R)-3-isocyanylbutanoate as acyl-adenylates (acyl-AMP), and then the acyl transfer to the dedicated acyl-carrier protein ScoB. The polypeptide is Fatty acid--[acyl-carrier-protein] ligase ScoC (Streptomyces coeruleorubidus).